The following is a 322-amino-acid chain: Adenine deaminase (322 aa).

His11, His13, and His189 together coordinate Zn(2+). Glu192 functions as the Proton donor in the catalytic mechanism. Residue Asp270 participates in Zn(2+) binding. Residue Asp271 coordinates substrate.

This sequence belongs to the metallo-dependent hydrolases superfamily. Adenosine and AMP deaminases family. Adenine deaminase type 2 subfamily. Requires Zn(2+) as cofactor.

The enzyme catalyses adenine + H2O + H(+) = hypoxanthine + NH4(+). In terms of biological role, catalyzes the hydrolytic deamination of adenine to hypoxanthine. Plays an important role in the purine salvage pathway and in nitrogen catabolism. This Rhizobium rhizogenes (strain K84 / ATCC BAA-868) (Agrobacterium radiobacter) protein is Adenine deaminase.